The sequence spans 379 residues: Cytochrome b (379 aa).

4 consecutive transmembrane segments (helical) span residues phenylalanine 33 to methionine 53, tryptophan 77 to valine 98, tryptophan 113 to leucine 133, and phenylalanine 178 to leucine 198. Residues histidine 83 and histidine 97 each coordinate heme b. Heme b is bound by residues histidine 182 and histidine 196. Histidine 201 contributes to the a ubiquinone binding site. Helical transmembrane passes span threonine 226 to phenylalanine 246, leucine 288 to asparagine 308, valine 320 to glycine 340, and phenylalanine 347 to proline 367.

The protein belongs to the cytochrome b family. In terms of assembly, the cytochrome bc1 complex contains 11 subunits: 3 respiratory subunits (MT-CYB, CYC1 and UQCRFS1), 2 core proteins (UQCRC1 and UQCRC2) and 6 low-molecular weight proteins (UQCRH/QCR6, UQCRB/QCR7, UQCRQ/QCR8, UQCR10/QCR9, UQCR11/QCR10 and a cleavage product of UQCRFS1). This cytochrome bc1 complex then forms a dimer. Heme b serves as cofactor.

It localises to the mitochondrion inner membrane. Component of the ubiquinol-cytochrome c reductase complex (complex III or cytochrome b-c1 complex) that is part of the mitochondrial respiratory chain. The b-c1 complex mediates electron transfer from ubiquinol to cytochrome c. Contributes to the generation of a proton gradient across the mitochondrial membrane that is then used for ATP synthesis. This Akodon fumeus (Smoky grass mouse) protein is Cytochrome b (MT-CYB).